A 629-amino-acid chain; its full sequence is tRNA uridine 5-carboxymethylaminomethyl modification enzyme MnmG (629 aa).

FAD is bound by residues 13 to 18, Val125, and Ser180; that span reads GGGHAG. Residue 273-287 participates in NAD(+) binding; that stretch reads GPRYCPSIEDKIHRF. Gln370 contacts FAD.

The protein belongs to the MnmG family. In terms of assembly, homodimer. Heterotetramer of two MnmE and two MnmG subunits. It depends on FAD as a cofactor.

It localises to the cytoplasm. In terms of biological role, NAD-binding protein involved in the addition of a carboxymethylaminomethyl (cmnm) group at the wobble position (U34) of certain tRNAs, forming tRNA-cmnm(5)s(2)U34. This Shewanella oneidensis (strain ATCC 700550 / JCM 31522 / CIP 106686 / LMG 19005 / NCIMB 14063 / MR-1) protein is tRNA uridine 5-carboxymethylaminomethyl modification enzyme MnmG.